Reading from the N-terminus, the 604-residue chain is Threonine--tRNA ligase (604 aa).

The tract at residues 209 to 500 is catalytic; that stretch reads DHRKLGQEMG…LTEHFGGEFP (292 aa). C301, H352, and H477 together coordinate Zn(2+).

This sequence belongs to the class-II aminoacyl-tRNA synthetase family. In terms of assembly, homodimer. It depends on Zn(2+) as a cofactor.

It localises to the cytoplasm. It carries out the reaction tRNA(Thr) + L-threonine + ATP = L-threonyl-tRNA(Thr) + AMP + diphosphate + H(+). Its function is as follows. Catalyzes the attachment of threonine to tRNA(Thr) in a two-step reaction: L-threonine is first activated by ATP to form Thr-AMP and then transferred to the acceptor end of tRNA(Thr). Also edits incorrectly charged L-seryl-tRNA(Thr). This Helicobacter hepaticus (strain ATCC 51449 / 3B1) protein is Threonine--tRNA ligase.